The following is a 772-amino-acid chain: MELLYKNIWIVPVCPFVASMSVGLGLFFFPKATKSLRRICAIISIFLLGIAMFISFSIFWQQIRGNPNHQLLWSWFFNKDISLQIGFLIDPLTSTMLVSVTSVGILVMIYSDSYMSHDQGYVRFFAYLSLFTASMLGLVLSPNPVQIYIFWELVGMCSYLLIGFWFSRPSAANACQKAFITNRVGDFGLLLGILGTYWITGSFDIHSLSERFNDLIDSNGVNLFLANMCALLLFLGPAAKSAQFPLHVWLPDAMEGPTPISALIHAATMVAAGIFFVARMFHFFEALPFTMNIISWVGGITALLGATIALAQKDLKKGLAYSTMSQPGYMMLAPGIGSYRAASFHLITHAYSKALLFLGSGSVIHSMEPIVGYSPEKSQNMSFMGGLRKYMPITGTTFLLGTLSLCGIPPFACFWSKDEILVDSWIASASLGWIAWCTAGLTGFYMFRMYFVTFEGDFRGNLSYKDTDKSVSYKSIWGNLQTLSERDKVFSNNSYTSFSDPTGDFYEIPENVFSLPERRIKNKSLNIEKSFNVLSDFKGSDNRNEISEDAFVSINREIRNENILYPNESDNSMLFSLISLAIPTLFIGFIGVPFSHKGINSDLLSDLLAPLTDSFHKDNSENLVDFFLKSIPSVSIALVGVSISFFIYGPVSSRDLRKEIDPKTKDFLGYFFNSLSNWSYYRGYIDNLYNVIFIEGTRILSKSICFFDQWIIDGIVNGIGILSFFGGEGMRYGEGGRIPSYLFGLIIGNILMLIILIIKNDIIQSYEYFTMF.

The next 15 helical transmembrane spans lie at 8–28, 39–59, 87–107, 120–140, 147–167, 185–205, 219–239, 258–278, 291–311, 395–415, 425–445, 574–594, 631–651, 710–730, and 738–758; these read IWIV…GLFF, ICAI…FSIF, FLID…GILV, GYVR…GLVL, IYIF…FWFS, GDFG…SFDI, NGVN…GPAA, TPIS…FFVA, MNII…IALA, GTTF…ACFW, WIAS…TGFY, LFSL…GVPF, IPSV…YGPV, WIID…GEGM, and IPSY…ILII.

This sequence belongs to the complex I subunit 5 family. As to quaternary structure, NDH is composed of at least 16 different subunits, 5 of which are encoded in the nucleus.

Its subcellular location is the plastid. The protein localises to the chloroplast thylakoid membrane. It catalyses the reaction a plastoquinone + NADH + (n+1) H(+)(in) = a plastoquinol + NAD(+) + n H(+)(out). It carries out the reaction a plastoquinone + NADPH + (n+1) H(+)(in) = a plastoquinol + NADP(+) + n H(+)(out). Its function is as follows. NDH shuttles electrons from NAD(P)H:plastoquinone, via FMN and iron-sulfur (Fe-S) centers, to quinones in the photosynthetic chain and possibly in a chloroplast respiratory chain. The immediate electron acceptor for the enzyme in this species is believed to be plastoquinone. Couples the redox reaction to proton translocation, and thus conserves the redox energy in a proton gradient. This Angiopteris evecta (Mule's foot fern) protein is NAD(P)H-quinone oxidoreductase subunit 5, chloroplastic (ndhF).